We begin with the raw amino-acid sequence, 431 residues long: Serine hydroxymethyltransferase (431 aa).

(6S)-5,6,7,8-tetrahydrofolate-binding positions include Leu121 and 125-127; that span reads GHL. An N6-(pyridoxal phosphate)lysine modification is found at Lys230. 369 to 371 provides a ligand contact to (6S)-5,6,7,8-tetrahydrofolate; the sequence is SPF.

It belongs to the SHMT family. As to quaternary structure, homodimer. It depends on pyridoxal 5'-phosphate as a cofactor.

It is found in the cytoplasm. The catalysed reaction is (6R)-5,10-methylene-5,6,7,8-tetrahydrofolate + glycine + H2O = (6S)-5,6,7,8-tetrahydrofolate + L-serine. Its pathway is one-carbon metabolism; tetrahydrofolate interconversion. It functions in the pathway amino-acid biosynthesis; glycine biosynthesis; glycine from L-serine: step 1/1. In terms of biological role, catalyzes the reversible interconversion of serine and glycine with tetrahydrofolate (THF) serving as the one-carbon carrier. This reaction serves as the major source of one-carbon groups required for the biosynthesis of purines, thymidylate, methionine, and other important biomolecules. Also exhibits THF-independent aldolase activity toward beta-hydroxyamino acids, producing glycine and aldehydes, via a retro-aldol mechanism. The sequence is that of Serine hydroxymethyltransferase from Cytophaga hutchinsonii (strain ATCC 33406 / DSM 1761 / CIP 103989 / NBRC 15051 / NCIMB 9469 / D465).